A 25-amino-acid chain; its full sequence is Small ribosomal subunit protein eS32 (25 aa).

Residues 1–25 (MREKWKKKRSRRLRRKRRKMRARSK) form a disordered region.

The protein belongs to the eukaryotic ribosomal protein eS32 family. In terms of assembly, component of the large ribosomal subunit.

This chain is Small ribosomal subunit protein eS32 (rpl41), found in Agaricus bisporus (White button mushroom).